Reading from the N-terminus, the 199-residue chain is MSLNILIIYFLGMVGQFNKIAIFLIFTVCWVLSIIKRQQFRWLAINNIEFSTLFVILFLVLIFVVTLLSSLRAPGDWDDTMYHLPLARSLVEHHAIVVEQYLRFPLFPQNADLLMALGLQLGDVRLAQFLANICFFVIACGLVGCSWEITKTYYPGIIATILLFTINPLKDHLGYAYIDLTLSLFCCSQYSYIYSLRKQ.

This is an uncharacterized protein from Shigella flexneri.